Consider the following 255-residue polypeptide: Triosephosphate isomerase (255 aa).

9–11 (NWK) contributes to the substrate binding site. His95 functions as the Electrophile in the catalytic mechanism. Glu167 (proton acceptor) is an active-site residue. Substrate is bound by residues Gly173, Ser212, and 233 to 234 (GG).

The protein belongs to the triosephosphate isomerase family. In terms of assembly, homodimer.

The protein resides in the cytoplasm. It carries out the reaction D-glyceraldehyde 3-phosphate = dihydroxyacetone phosphate. It participates in carbohydrate biosynthesis; gluconeogenesis. It functions in the pathway carbohydrate degradation; glycolysis; D-glyceraldehyde 3-phosphate from glycerone phosphate: step 1/1. Functionally, involved in the gluconeogenesis. Catalyzes stereospecifically the conversion of dihydroxyacetone phosphate (DHAP) to D-glyceraldehyde-3-phosphate (G3P). This Salmonella dublin (strain CT_02021853) protein is Triosephosphate isomerase.